Reading from the N-terminus, the 105-residue chain is Small ribosomal subunit protein bS20 (105 aa).

The protein belongs to the bacterial ribosomal protein bS20 family.

Functionally, binds directly to 16S ribosomal RNA. This chain is Small ribosomal subunit protein bS20, found in Caldanaerobacter subterraneus subsp. tengcongensis (strain DSM 15242 / JCM 11007 / NBRC 100824 / MB4) (Thermoanaerobacter tengcongensis).